We begin with the raw amino-acid sequence, 461 residues long: Nuclear distribution protein PAC1 (461 aa).

One can recognise a LisH domain in the interval 9–41 (QAEELHKSIIAYLTANNLLNTANTLRAELNLSE). WD repeat units lie at residues 114 to 155 (SHRD…RTIK), 157 to 197 (HTRA…KNIR), 201 to 248 (GHDH…CVRT), 251 to 290 (GHTAWVRDVYPSPDGRFLLSTGDDSTARLWDISVSNPESK), 312 to 355 (QYLS…LMTL), 357 to 396 (GHDNWIRALAFHPGGKYLFSVSDDRTLRCWDLSQEGKCIK), and 401 to 457 (AHER…MKLR).

Belongs to the WD repeat LIS1/nudF family. Self-associates. Interacts with NDL1 and dynein.

Its subcellular location is the cytoplasm. The protein resides in the cytoskeleton. The protein localises to the spindle pole. Its function is as follows. Positively regulates the activity of the minus-end directed microtubule motor protein dynein. May enhance dynein-mediated microtubule sliding by targeting dynein to the microtubule plus end. Required for nuclear migration during vegetative growth as well as development. Required for retrograde early endosome (EE) transport from the hyphal tip. Required for localization of dynein to the mitotic spindle poles. Recruits additional proteins to the dynein complex at SPBs. The protein is Nuclear distribution protein PAC1 of Arthroderma otae (strain ATCC MYA-4605 / CBS 113480) (Microsporum canis).